The primary structure comprises 670 residues: tRNA 5-methylaminomethyl-2-thiouridine biosynthesis bifunctional protein MnmC (670 aa).

Residues 1 to 242 (MTFSVQHAEI…KRECLSGLKI (242 aa)) are tRNA (mnm(5)s(2)U34)-methyltransferase. The segment at 269–670 (IGGGIASLCA…KKWLKGSKVE (402 aa)) is FAD-dependent cmnm(5)s(2)U34 oxidoreductase.

This sequence in the N-terminal section; belongs to the methyltransferase superfamily. tRNA (mnm(5)s(2)U34)-methyltransferase family. In the C-terminal section; belongs to the DAO family. The cofactor is FAD.

It localises to the cytoplasm. The catalysed reaction is 5-aminomethyl-2-thiouridine(34) in tRNA + S-adenosyl-L-methionine = 5-methylaminomethyl-2-thiouridine(34) in tRNA + S-adenosyl-L-homocysteine + H(+). In terms of biological role, catalyzes the last two steps in the biosynthesis of 5-methylaminomethyl-2-thiouridine (mnm(5)s(2)U) at the wobble position (U34) in tRNA. Catalyzes the FAD-dependent demodification of cmnm(5)s(2)U34 to nm(5)s(2)U34, followed by the transfer of a methyl group from S-adenosyl-L-methionine to nm(5)s(2)U34, to form mnm(5)s(2)U34. This Haemophilus influenzae (strain ATCC 51907 / DSM 11121 / KW20 / Rd) protein is tRNA 5-methylaminomethyl-2-thiouridine biosynthesis bifunctional protein MnmC.